The sequence spans 99 residues: MNDLRMYNVLVRPLVTEKSTMQLEKGNQISFAVATWANKPQIKKAIETIYSVKVEAVQVSNAKGKTKRFGKLEGKRKDWKRAVVRLQEGQSIDLFDQGA.

This sequence belongs to the universal ribosomal protein uL23 family. In terms of assembly, part of the 50S ribosomal subunit. Contacts protein L29, and trigger factor when it is bound to the ribosome.

Its function is as follows. One of the early assembly proteins it binds 23S rRNA. One of the proteins that surrounds the polypeptide exit tunnel on the outside of the ribosome. Forms the main docking site for trigger factor binding to the ribosome. This Magnetococcus marinus (strain ATCC BAA-1437 / JCM 17883 / MC-1) protein is Large ribosomal subunit protein uL23.